Reading from the N-terminus, the 230-residue chain is Protein GrpE (230 aa).

2 disordered regions span residues 1-28 (MADEKNKPENPDLDQRDINNPRDREALK) and 209-230 (GVSKGGPKVSAENGASTSEDNA). Residues 221-230 (NGASTSEDNA) are compositionally biased toward polar residues.

Belongs to the GrpE family. Homodimer.

The protein resides in the cytoplasm. Participates actively in the response to hyperosmotic and heat shock by preventing the aggregation of stress-denatured proteins, in association with DnaK and GrpE. It is the nucleotide exchange factor for DnaK and may function as a thermosensor. Unfolded proteins bind initially to DnaJ; upon interaction with the DnaJ-bound protein, DnaK hydrolyzes its bound ATP, resulting in the formation of a stable complex. GrpE releases ADP from DnaK; ATP binding to DnaK triggers the release of the substrate protein, thus completing the reaction cycle. Several rounds of ATP-dependent interactions between DnaJ, DnaK and GrpE are required for fully efficient folding. This is Protein GrpE from Brucella ovis (strain ATCC 25840 / 63/290 / NCTC 10512).